Consider the following 329-residue polypeptide: Flotillin-like protein FloA (329 aa).

The chain crosses the membrane as a helical span at residues 4–24 (IWGFLILILVLIFLGVFFSFV).

Belongs to the flotillin-like FloA family. As to quaternary structure, homooligomerizes.

It is found in the cell membrane. The protein resides in the membrane raft. Its function is as follows. Found in functional membrane microdomains (FMM) that may be equivalent to eukaryotic membrane rafts. FMMs are highly dynamic and increase in number as cells age. Flotillins are thought to be important factors in membrane fluidity. The polypeptide is Flotillin-like protein FloA (Dictyoglomus turgidum (strain DSM 6724 / Z-1310)).